The chain runs to 51 residues: MREKIKLESSAGTGHFYTTTKNKRTMPEKMEIKKFDPVARKHVLYKETKLK.

Residues 1–23 (MREKIKLESSAGTGHFYTTTKNK) form a disordered region. Positions 10-20 (SAGTGHFYTTT) are enriched in polar residues.

The protein belongs to the bacterial ribosomal protein bL33 family.

The polypeptide is Large ribosomal subunit protein bL33 (Methylobacillus flagellatus (strain ATCC 51484 / DSM 6875 / VKM B-1610 / KT)).